Here is a 112-residue protein sequence, read N- to C-terminus: Large ribosomal subunit protein bL17 (112 aa).

Belongs to the bacterial ribosomal protein bL17 family. Part of the 50S ribosomal subunit. Contacts protein L32.

This is Large ribosomal subunit protein bL17 from Caldanaerobacter subterraneus subsp. tengcongensis (strain DSM 15242 / JCM 11007 / NBRC 100824 / MB4) (Thermoanaerobacter tengcongensis).